A 274-amino-acid chain; its full sequence is NH(3)-dependent NAD(+) synthetase (274 aa).

Residue Gly46–Ser53 coordinates ATP. Mg(2+) is bound at residue Asp52. Arg140 is a deamido-NAD(+) binding site. Residue Thr160 participates in ATP binding. Residue Glu165 coordinates Mg(2+). Residues Lys173 and Asp180 each coordinate deamido-NAD(+). The ATP site is built by Lys189 and Thr211. His260 to Lys261 contributes to the deamido-NAD(+) binding site.

The protein belongs to the NAD synthetase family. As to quaternary structure, homodimer.

The catalysed reaction is deamido-NAD(+) + NH4(+) + ATP = AMP + diphosphate + NAD(+) + H(+). The protein operates within cofactor biosynthesis; NAD(+) biosynthesis; NAD(+) from deamido-NAD(+) (ammonia route): step 1/1. Functionally, catalyzes the ATP-dependent amidation of deamido-NAD to form NAD. Uses ammonia as a nitrogen source. The sequence is that of NH(3)-dependent NAD(+) synthetase from Streptococcus suis (strain 05ZYH33).